The following is an 801-amino-acid chain: Cadherin-20 (801 aa).

Positions 1–34 are cleaved as a signal peptide; it reads MWTTGRMSNAKSWLGLGTSLYFWALMDLATTVLS. Positions 35 to 59 are excised as a propeptide; sequence STPMPEVELDTLFSGKPQSHQRSRR. Over 60–619 the chain is Extracellular; sequence SWVWNQFFVL…AYMLPVSLSR (560 aa). 5 Cadherin domains span residues 61–165, 166–274, 275–389, 390–494, and 494–610; these read WVWN…EPKF, LDGP…PPRF, PQKH…PPVF, EPRF…APEF, and FPRF…SPEA. Asparagine 261 carries N-linked (GlcNAc...) asparagine glycosylation. N-linked (GlcNAc...) asparagine glycans are attached at residues asparagine 420, asparagine 461, and asparagine 542. Residues 620 to 640 traverse the membrane as a helical segment; sequence GALIAILACVFVLLVLVLLIL. At 641 to 801 the chain is on the cytoplasmic side; that stretch reads SMRRHRKQPY…GASEGPSPLW (161 aa).

It localises to the cell membrane. Its function is as follows. Cadherins are calcium-dependent cell adhesion proteins. They preferentially interact with themselves in a homophilic manner in connecting cells; cadherins may thus contribute to the sorting of heterogeneous cell types. This chain is Cadherin-20 (Cdh20), found in Rattus norvegicus (Rat).